The following is a 436-amino-acid chain: EPS I polysaccharide export inner membrane protein EpsE (436 aa).

The next 12 helical transmembrane spans lie at 20 to 40, 49 to 69, 91 to 111, 132 to 152, 160 to 180, 184 to 204, 234 to 254, 261 to 281, 307 to 327, 341 to 361, 375 to 395, and 396 to 416; these read VLGLGAAVASRGAVFLVNIML, FGLFSYAYVTALNLGLFLATG, LCAFIVLLVALIAVAATALYL, MAAIVLIATAFTQALQAFLYA, ASVSIGAALLLLAMLWTMGPI, VVALVIFLAINAGAAASQLVI, VLTTSMGAPVHWICLSMLAAM, LALFSVAFQWYIAITFIPATL, ALLFGGGLSLALGCMAFLLAG, AAASMRSLAVAAALCGISVLL, FAMAAVYSVIYVAAAYLALRL, and GYGAPSIGLAMSAAYCCLILF.

It to E.coli bicyclomycin resistance protein (BCR).

It is found in the cell inner membrane. Probably involved in polymerization and/or export of exopolysaccharide EPS I which functions as a virulence factor. May play a role in export of EPS I or its intermediates across the membranes. The sequence is that of EPS I polysaccharide export inner membrane protein EpsE (epsE) from Ralstonia nicotianae (strain ATCC BAA-1114 / GMI1000) (Ralstonia solanacearum).